The chain runs to 113 residues: Phosphorelay protein LuxU (113 aa).

An HPt domain is found at 18–113; the sequence is GEENVPILVN…THQCYSDLVH (96 aa). A Phosphohistidine modification is found at His-57.

As to quaternary structure, monomer.

Its function is as follows. Phosphorelay protein which receives sensory signals from a sensory kinase and transmit them to LuxO. At low cell density, a phosphoryl group is transferred from the sensory kinase, probably on His-57 and this phosphoryl group is further transferred to LuxO. The chain is Phosphorelay protein LuxU (luxU) from Vibrio cholerae serotype O1 (strain ATCC 39315 / El Tor Inaba N16961).